The following is a 745-amino-acid chain: Immunoglobulin superfamily containing leucine-rich repeat protein 2 (745 aa).

The N-terminal stretch at 1–19 (MGPFGALCLAWALLGVVRA) is a signal peptide. Residues 20 to 51 (CPEPCACVDKYAHQFADCAYKELREVPEGLPA) enclose the LRRNT domain. Topologically, residues 20 to 589 (CPEPCACVDK…VFSTKKELPS (570 aa)) are extracellular. N-linked (GlcNAc...) asparagine glycans are attached at residues Asn-52 and Asn-73. 5 LRR repeats span residues 52-73 (NVTT…AFVN), 76-97 (QVTS…ALAV), 100-123 (QLKN…RNLS), 124-145 (ALQL…ALGA), and 148-169 (DLRS…TFDA). A glycan (N-linked (GlcNAc...) asparagine) is linked at Asn-121. The 52-residue stretch at 181 to 232 (NPFHCSCGLVWLQAWAASTRVSLPEPDSIACASPPELQGVPVHRLPALPCAP) folds into the LRRCT domain. The region spanning 233-372 (PSVRLSAEPP…GTNSTSLRVT (140 aa)) is the Ig-like domain. Cys-260 and Cys-356 are disulfide-bonded. Residues 290–300 (KEEDGGDKVED) show a composition bias toward basic and acidic residues. Positions 290–328 (KEEDGGDKVEDGEGDGDEDLPTQTEAPTPTPAPAWPAPP) are disordered. The segment covering 317–328 (TPTPAPAWPAPP) has biased composition (pro residues). N-linked (GlcNAc...) asparagine glycosylation is found at Asn-338 and Asn-365. The disordered stretch occupies residues 376–423 (AGPPKHAPGTGEEPDAQVPTSERKATTKGRSNSVLPFKPEGKTKGQGL). Asn-474 and Asn-563 each carry an N-linked (GlcNAc...) asparagine glycan. A helical membrane pass occupies residues 590–610 (LLVIVTVSVFLLVLATVPLLG). At 611–745 (AACCHLLAKH…INGNYRQTAG (135 aa)) the chain is on the cytoplasmic side. The interval 654-697 (SEKSYPARGEAGGEEPEEVPEEGLDEDVEQGDPSGDLQREESLA) is disordered. The span at 665–683 (GGEEPEEVPEEGLDEDVEQ) shows a compositional bias: acidic residues. Tyr-719 carries the post-translational modification Phosphotyrosine. Residue Ser-720 is modified to Phosphoserine.

Homomultimer. Interacts with NTRK1/TrkA. In terms of tissue distribution, at 11.5 dpc, expressed in spinal nerves, their roots and the ventral spinal cord. At 12.5 dpc, detected in the ventral spinal cord, dorsal root ganglia (DRG), dorsal and ventral roots and sympathetic chain ganglia. At 12.5 dpc, expressed in almost all motor neurons which also express RET and in almost all DRG sensory neurons which also express NTRK1. At 18.5 dpc, expressed only in a subset of NTRK1-expressing neurons but still expressed in nearly all RET-expressing neurons.

It localises to the cell membrane. In terms of biological role, required for axon extension during neural development. This chain is Immunoglobulin superfamily containing leucine-rich repeat protein 2 (Islr2), found in Mus musculus (Mouse).